Here is a 143-residue protein sequence, read N- to C-terminus: Interferon gamma (143 aa).

Gln-1 is modified (pyrrolidone carboxylic acid). N-linked (GlcNAc...) asparagine glycans are attached at residues Asn-25 and Asn-97.

This sequence belongs to the type II (or gamma) interferon family. In terms of assembly, homodimer. Interacts with IFNGR1 (via extracellular domain); this interaction promotes IFNGR1 dimerization.

It localises to the secreted. Type II interferon produced by immune cells such as T-cells and NK cells that plays crucial roles in antimicrobial, antiviral, and antitumor responses by activating effector immune cells and enhancing antigen presentation. Primarily signals through the JAK-STAT pathway after interaction with its receptor IFNGR1 to affect gene regulation. Upon IFNG binding, IFNGR1 intracellular domain opens out to allow association of downstream signaling components JAK2, JAK1 and STAT1, leading to STAT1 activation, nuclear translocation and transcription of IFNG-regulated genes. Many of the induced genes are transcription factors such as IRF1 that are able to further drive regulation of a next wave of transcription. Plays a role in class I antigen presentation pathway by inducing a replacement of catalytic proteasome subunits with immunoproteasome subunits. In turn, increases the quantity, quality, and repertoire of peptides for class I MHC loading. Increases the efficiency of peptide generation also by inducing the expression of activator PA28 that associates with the proteasome and alters its proteolytic cleavage preference. Up-regulates as well MHC II complexes on the cell surface by promoting expression of several key molecules such as cathepsins B/CTSB, H/CTSH, and L/CTSL. Participates in the regulation of hematopoietic stem cells during development and under homeostatic conditions by affecting their development, quiescence, and differentiation. This chain is Interferon gamma (IFNG), found in Pan troglodytes (Chimpanzee).